The chain runs to 157 residues: MRIGHGFDVHKFGGEGPLVIGGVRIPYEKGLLAHSDGDVALHAATDALLGAAALGDIGKLFPDTDPAFKGADSRVLLREAWKRIRAKGYRLGNLDITIIAQAPKMAPHIPQMRVFLAEDLQCHMDDVNVKATTTEQLGFTGRGEGIACEAVALLIKE.

A divalent metal cation is bound by residues Asp-8 and His-10. 4-CDP-2-C-methyl-D-erythritol 2-phosphate contacts are provided by residues 8–10 and 34–35; these read DVH and HS. His-42 is an a divalent metal cation binding site. 4-CDP-2-C-methyl-D-erythritol 2-phosphate-binding positions include 56–58, 61–65, 100–106, 132–135, Phe-139, and Arg-142; these read DIG, FPDTD, AQAPKMA, and TTTE.

It belongs to the IspF family. Homotrimer. Requires a divalent metal cation as cofactor.

It catalyses the reaction 4-CDP-2-C-methyl-D-erythritol 2-phosphate = 2-C-methyl-D-erythritol 2,4-cyclic diphosphate + CMP. Its pathway is isoprenoid biosynthesis; isopentenyl diphosphate biosynthesis via DXP pathway; isopentenyl diphosphate from 1-deoxy-D-xylulose 5-phosphate: step 4/6. In terms of biological role, involved in the biosynthesis of isopentenyl diphosphate (IPP) and dimethylallyl diphosphate (DMAPP), two major building blocks of isoprenoid compounds. Catalyzes the conversion of 4-diphosphocytidyl-2-C-methyl-D-erythritol 2-phosphate (CDP-ME2P) to 2-C-methyl-D-erythritol 2,4-cyclodiphosphate (ME-CPP) with a corresponding release of cytidine 5-monophosphate (CMP). The chain is 2-C-methyl-D-erythritol 2,4-cyclodiphosphate synthase from Serratia proteamaculans (strain 568).